The following is a 1516-amino-acid chain: Myosin-14 (1516 aa).

One can recognise a Myosin N-terminal SH3-like domain in the interval 7 to 56 (NVGSCVWVEDPEVAWIDGEVIEVKGSDIKVKCTSGKTVAIKVSSAYPKDV). Positions 61–738 (SGVDDMTRLA…QMADLDARRN (678 aa)) constitute a Myosin motor domain. ATP is bound by residues 155 to 162 (GESGAGKT) and 208 to 216 (NNNSSRFGK). 4 actin-binding regions span residues 494–528 (LIEKKAGGIISLLNEACMFPRATHETFAEKMYQTF), 530–553 (DHKHFSKPKLSRTDFTICHYAGDV), 588–612 (FPLLAEDANKKSKFSSISSRFKQQL), and 612–634 (LVTLLETLSTTEPHYIRCVKPNN). IQ domains lie at 741 to 770 (LGRAASRIQRKFRSYLSRKTFLMLRKVATN), 764 to 793 (LRKVATNMQAVCRGQLSRLIFEGLRRDAAV), 789 to 818 (RDAAVLEIQRDIRMHLARKSYKELYFAAVS), 812 to 841 (LYFAAVSIQLGIRGMASRGRLRFQRQDKAA), 837 to 866 (QDKAAIMIQSHCRKFLAQLHYQRLKKAAIT), and 860 to 889 (LKKAAITTQSAWRARLARKELRKLKMAAKE). The stretch at 890 to 1056 (TGVLEAAKSK…ENKILRQKSL (167 aa)) forms a coiled coil. The disordered stretch occupies residues 1061–1085 (GHLPPTPVKGSQNGHFSSKESPFNG). Over residues 1069-1084 (KGSQNGHFSSKESPFN) the composition is skewed to polar residues. One can recognise a Dilute domain in the interval 1158–1463 (DRLVQMIGSA…IANMRVLMTE (306 aa)).

Belongs to the TRAFAC class myosin-kinesin ATPase superfamily. Myosin family. Plant myosin class XI subfamily. Homodimer.

Functionally, myosin heavy chain that is required for the cell cycle-regulated transport of various organelles and proteins for their segregation. Functions by binding with its tail domain to receptor proteins on organelles and exerting force with its N-terminal motor domain against actin filaments, thereby transporting its cargo along polarized actin cables. The sequence is that of Myosin-14 (XI-H) from Arabidopsis thaliana (Mouse-ear cress).